A 275-amino-acid polypeptide reads, in one-letter code: Dermonecrotic toxin LamSicTox-alphaIV1ii (275 aa).

Histidine 5 is a catalytic residue. Mg(2+) is bound by residues glutamate 25 and aspartate 27. Histidine 41 (nucleophile) is an active-site residue. 2 cysteine pairs are disulfide-bonded: cysteine 45–cysteine 51 and cysteine 47–cysteine 192. Residue aspartate 85 coordinates Mg(2+).

This sequence belongs to the arthropod phospholipase D family. Class II subfamily. Mg(2+) serves as cofactor. Expressed by the venom gland.

The protein localises to the secreted. It carries out the reaction an N-(acyl)-sphingosylphosphocholine = an N-(acyl)-sphingosyl-1,3-cyclic phosphate + choline. The catalysed reaction is an N-(acyl)-sphingosylphosphoethanolamine = an N-(acyl)-sphingosyl-1,3-cyclic phosphate + ethanolamine. It catalyses the reaction a 1-acyl-sn-glycero-3-phosphocholine = a 1-acyl-sn-glycero-2,3-cyclic phosphate + choline. The enzyme catalyses a 1-acyl-sn-glycero-3-phosphoethanolamine = a 1-acyl-sn-glycero-2,3-cyclic phosphate + ethanolamine. Dermonecrotic toxins cleave the phosphodiester linkage between the phosphate and headgroup of certain phospholipids (sphingolipid and lysolipid substrates), forming an alcohol (often choline) and a cyclic phosphate. This toxin acts on sphingomyelin (SM). It may also act on ceramide phosphoethanolamine (CPE), lysophosphatidylcholine (LPC) and lysophosphatidylethanolamine (LPE), but not on lysophosphatidylserine (LPS), and lysophosphatidylglycerol (LPG). It acts by transphosphatidylation, releasing exclusively cyclic phosphate products as second products. Induces dermonecrosis, hemolysis, increased vascular permeability, edema, inflammatory response, and platelet aggregation. This Loxosceles amazonica (Recluse spider) protein is Dermonecrotic toxin LamSicTox-alphaIV1ii.